Reading from the N-terminus, the 149-residue chain is MRLLLLNGPNLNLLGQREPGFYGAMTLKAIEADLLAQAEAEAVQLECFQSNFEGALVDQIHQAIGQVQGILINAGAYTHTSIALRDALLGAAIPYVELHLSNTHAREGFRHHSYLADRAVGVVSGFGALSYRLALEGLLAHLRQPQQVL.

Catalysis depends on Tyr22, which acts as the Proton acceptor. The substrate site is built by Asn73, His79, and Asp86. The active-site Proton donor is the His99. Residues 100–101 and Arg110 contribute to the substrate site; that span reads LS.

The protein belongs to the type-II 3-dehydroquinase family. Homododecamer.

It catalyses the reaction 3-dehydroquinate = 3-dehydroshikimate + H2O. The protein operates within metabolic intermediate biosynthesis; chorismate biosynthesis; chorismate from D-erythrose 4-phosphate and phosphoenolpyruvate: step 3/7. Functionally, catalyzes a trans-dehydration via an enolate intermediate. This Prochlorococcus marinus (strain MIT 9313) protein is 3-dehydroquinate dehydratase.